The chain runs to 183 residues: Dual-action ribosomal maturation protein DarP (183 aa).

It belongs to the DarP family.

The protein resides in the cytoplasm. Functionally, member of a network of 50S ribosomal subunit biogenesis factors which assembles along the 30S-50S interface, preventing incorrect 23S rRNA structures from forming. Promotes peptidyl transferase center (PTC) maturation. In Shigella boydii serotype 18 (strain CDC 3083-94 / BS512), this protein is Dual-action ribosomal maturation protein DarP.